Consider the following 194-residue polypeptide: dITP/XTP pyrophosphatase (194 aa).

8–13 is a substrate binding site; it reads TGNPGK. Mg(2+)-binding residues include E38 and D67. D67 (proton acceptor) is an active-site residue. Substrate contacts are provided by residues S68, 146–149, K169, and 174–175; these read FGYD and HR.

It belongs to the HAM1 NTPase family. In terms of assembly, homodimer. Mg(2+) serves as cofactor.

The catalysed reaction is XTP + H2O = XMP + diphosphate + H(+). It carries out the reaction dITP + H2O = dIMP + diphosphate + H(+). The enzyme catalyses ITP + H2O = IMP + diphosphate + H(+). Pyrophosphatase that catalyzes the hydrolysis of nucleoside triphosphates to their monophosphate derivatives, with a high preference for the non-canonical purine nucleotides XTP (xanthosine triphosphate), dITP (deoxyinosine triphosphate) and ITP. Seems to function as a house-cleaning enzyme that removes non-canonical purine nucleotides from the nucleotide pool, thus preventing their incorporation into DNA/RNA and avoiding chromosomal lesions. The protein is dITP/XTP pyrophosphatase of Synechocystis sp. (strain ATCC 27184 / PCC 6803 / Kazusa).